A 351-amino-acid chain; its full sequence is MNPPKSAPDAQGLSYRDAGVDIDAGDALVDKIKPFAKKTLRDGVLGGIGGFGALFEVPKKYREPVLVSGTDGVGTKLKLAFHLNKHDTVGQDLVAMSVNDILVQGAEPLFFLDYFACGRLDVETAATVVKGIATGCELAGCALIGGETAEMPSMYPDGEYDLAGFAVGAVEKSKIIDGSTIAEGDVVLGLASSGIHSNGFSLVRKIIERANPDLSADFHGRSLADALMAPTRIYVKPLLALMEKIAVKGMAHITGGGLVENIPRVLRDGLTAELDQHAWPLPPLFQWLQQHGGVADAEMHRVFNCGIGMAVIVSAADADDALRQLADAGEQVWKIGTVRASREGEAQTVVV.

The protein belongs to the AIR synthase family.

The protein resides in the cytoplasm. The enzyme catalyses 2-formamido-N(1)-(5-O-phospho-beta-D-ribosyl)acetamidine + ATP = 5-amino-1-(5-phospho-beta-D-ribosyl)imidazole + ADP + phosphate + H(+). Its pathway is purine metabolism; IMP biosynthesis via de novo pathway; 5-amino-1-(5-phospho-D-ribosyl)imidazole from N(2)-formyl-N(1)-(5-phospho-D-ribosyl)glycinamide: step 2/2. The chain is Phosphoribosylformylglycinamidine cyclo-ligase from Burkholderia pseudomallei (strain 668).